Consider the following 338-residue polypeptide: Fructose-1,6-bisphosphatase class 1 (338 aa).

Mg(2+) contacts are provided by Glu92, Asp113, Leu115, and Asp116. Residues 116–119, Asn208, and Lys274 each bind substrate; that span reads DGSS. Position 280 (Glu280) interacts with Mg(2+).

Belongs to the FBPase class 1 family. As to quaternary structure, homotetramer. Mg(2+) is required as a cofactor.

It is found in the cytoplasm. It catalyses the reaction beta-D-fructose 1,6-bisphosphate + H2O = beta-D-fructose 6-phosphate + phosphate. Its pathway is carbohydrate biosynthesis; gluconeogenesis. The chain is Fructose-1,6-bisphosphatase class 1 from Paramagnetospirillum magneticum (strain ATCC 700264 / AMB-1) (Magnetospirillum magneticum).